We begin with the raw amino-acid sequence, 323 residues long: tRNA U34 carboxymethyltransferase (323 aa).

Carboxy-S-adenosyl-L-methionine is bound by residues K91, W105, K110, G130, 180-181, M196, Y200, and R315; that span reads VE.

It belongs to the class I-like SAM-binding methyltransferase superfamily. CmoB family. Homotetramer.

It catalyses the reaction carboxy-S-adenosyl-L-methionine + 5-hydroxyuridine(34) in tRNA = 5-carboxymethoxyuridine(34) in tRNA + S-adenosyl-L-homocysteine + H(+). In terms of biological role, catalyzes carboxymethyl transfer from carboxy-S-adenosyl-L-methionine (Cx-SAM) to 5-hydroxyuridine (ho5U) to form 5-carboxymethoxyuridine (cmo5U) at position 34 in tRNAs. The protein is tRNA U34 carboxymethyltransferase of Trichlorobacter lovleyi (strain ATCC BAA-1151 / DSM 17278 / SZ) (Geobacter lovleyi).